The primary structure comprises 570 residues: Methyl-coenzyme M reductase subunit alpha (570 aa).

Residue Q161 coordinates coenzyme F430. Residues R239, 270 to 271, and R284 each bind coenzyme B; that span reads KH. At H271 the chain carries Pros-methylhistidine. R285 is subject to 5-methylarginine. Residues Y346 and F464 each contribute to the coenzyme M site. G465 bears the 1-thioglycine mark. Residue D470 is modified to (Z)-2,3-didehydroaspartate. At C472 the chain carries S-methylcysteine.

The protein belongs to the methyl-coenzyme M reductase alpha subunit family. As to quaternary structure, MCR is a hexamer of two alpha, two beta, and two gamma chains, forming a dimer of heterotrimers. Requires coenzyme F430 as cofactor. The alpha subunit contains five modified amino acids near the active site region. Is methylated on His-271, Arg-285 and Cys-472, probably by the action of specific S-adenosylmethionine-dependent methyltransferases. Also contains a thioglycine at position 465, forming a thiopeptide bond. Contains a didehydroaspartate residue at position 470. The methylation on C5 of Arg-285 is a post-translational methylation not essential in vivo, but which plays a role for the stability and structural integrity of MCR. Does not show a methylation at Gln-420, as shown for M.marburgensis.

It localises to the cytoplasm. It carries out the reaction coenzyme B + methyl-coenzyme M = methane + coenzyme M-coenzyme B heterodisulfide. It functions in the pathway one-carbon metabolism; methyl-coenzyme M reduction; methane from methyl-coenzyme M: step 1/1. Component of the methyl-coenzyme M reductase (MCR) I that catalyzes the reductive cleavage of methyl-coenzyme M (CoM-S-CH3 or 2-(methylthio)ethanesulfonate) using coenzyme B (CoB or 7-mercaptoheptanoylthreonine phosphate) as reductant which results in the production of methane and the mixed heterodisulfide of CoB and CoM (CoM-S-S-CoB). This is the final step in methanogenesis. In Methanosarcina barkeri (strain Fusaro / DSM 804), this protein is Methyl-coenzyme M reductase subunit alpha (mcrA).